The following is a 446-amino-acid chain: DDB1- and CUL4-associated factor 12-A (446 aa).

The segment covering 1–12 (MTRRSVSRKRRA) has biased composition (basic residues). A disordered region spans residues 1–32 (MTRRSVSRKRRANPGSGPGEQSDWDHSAHKRK). WD repeat units lie at residues 132-173 (SHQS…PVCV), 177-215 (GHNDWIFSIAWISDTMAVSGSRDGSMGLWEMTDEVVNKS), 245-284 (PVNCKVRALAFNSNNKELGAVSLDGFFHLWKAEQTLSKLL), and 333-370 (EQGSGIRSVSFYEHIVTVGTGQGALLFYDIRAQRFLED).

This sequence belongs to the WD repeat DCAF12 family. As to quaternary structure, component of the DCX(DCAF12) E3 ubiquitin ligase complex, at least composed of cul4 (cul4a or cul4b), ddb1, dcaf12 and rbx1.

Its subcellular location is the cytoplasm. It localises to the cytoskeleton. It is found in the microtubule organizing center. The protein localises to the centrosome. The protein resides in the nucleus. The protein operates within protein modification; protein ubiquitination. Its function is as follows. Substrate-recognition component of a DCX (DDB1-CUL4-X-box) E3 ubiquitin-protein ligase complex of the DesCEND (destruction via C-end degrons) pathway, which recognizes a C-degron located at the extreme C terminus of target proteins, leading to their ubiquitination and degradation. The C-degron recognized by the DesCEND pathway is usually a motif of less than ten residues and can be present in full-length proteins, truncated proteins or proteolytically cleaved forms. The DCX(DCAF12) complex specifically recognizes proteins with a diglutamate (Glu-Glu) at the C-terminus leading to their ubiquitination and degradation. Also directly recognizes the C-terminal glutamate-leucine (Glu-Leu) degron as an alternative degron in proteins leading to their ubiquitination and degradation. The polypeptide is DDB1- and CUL4-associated factor 12-A (dcaf12-a) (Xenopus laevis (African clawed frog)).